A 206-amino-acid chain; its full sequence is MDWQLDAAELRVLGALMEKEATTPDYYPMSLNALVNACNQKSNREPVVNFDEETVETALHELRAKGLSSRISGESRVPKHEQRFVEKFNLGRREAAVMCVLMLRGPQTVGELRGRTERIFTFDDLEGVESTLQRLAEIGFVKKLPRQTGYKEQRWAQLLAGDIEVAEEAAPAMMERGASDRDRIAALEEEVAELKRAFEQFRRNFE.

The protein belongs to the UPF0502 family.

The polypeptide is UPF0502 protein Acid_1185 (Solibacter usitatus (strain Ellin6076)).